The sequence spans 180 residues: uncharacterized protein (180 aa).

It is found in the mitochondrion. This is an uncharacterized protein from Marchantia polymorpha (Common liverwort).